Reading from the N-terminus, the 324-residue chain is Acetyl-coenzyme A carboxylase carboxyl transferase subunit alpha (324 aa).

The CoA carboxyltransferase C-terminal domain maps to 37–291; the sequence is KLDKRLDRLK…QEYVLQEWLK (255 aa).

This sequence belongs to the AccA family. In terms of assembly, acetyl-CoA carboxylase is a heterohexamer composed of biotin carboxyl carrier protein (AccB), biotin carboxylase (AccC) and two subunits each of ACCase subunit alpha (AccA) and ACCase subunit beta (AccD).

It localises to the cytoplasm. The catalysed reaction is N(6)-carboxybiotinyl-L-lysyl-[protein] + acetyl-CoA = N(6)-biotinyl-L-lysyl-[protein] + malonyl-CoA. Its pathway is lipid metabolism; malonyl-CoA biosynthesis; malonyl-CoA from acetyl-CoA: step 1/1. Functionally, component of the acetyl coenzyme A carboxylase (ACC) complex. First, biotin carboxylase catalyzes the carboxylation of biotin on its carrier protein (BCCP) and then the CO(2) group is transferred by the carboxyltransferase to acetyl-CoA to form malonyl-CoA. This chain is Acetyl-coenzyme A carboxylase carboxyl transferase subunit alpha, found in Chlamydia trachomatis serovar D (strain ATCC VR-885 / DSM 19411 / UW-3/Cx).